A 723-amino-acid polypeptide reads, in one-letter code: Probable C-mannosyltransferase DPY19L4 (723 aa).

Residues Met1–Asp33 form a disordered region. N-acetylalanine is present on Ala2. The span at Lys18–Ser32 shows a compositional bias: basic and acidic residues. Transmembrane regions (helical) follow at residues Ile52 to Ala72, Val161 to Ala178, Trp184 to Ile202, Leu222 to Leu240, Met260 to Leu280, Tyr292 to Phe310, Leu316 to Val337, Val349 to Val370, Leu421 to Phe441, Ile466 to Leu486, Ile489 to Met509, and Pro522 to Trp542.

It belongs to the dpy-19 family. As to expression, widely expressed.

Its subcellular location is the membrane. Functionally, probable C-mannosyltransferase that mediates C-mannosylation of tryptophan residues on target proteins. The polypeptide is Probable C-mannosyltransferase DPY19L4 (DPY19L4) (Homo sapiens (Human)).